A 182-amino-acid polypeptide reads, in one-letter code: ATP synthase subunit b, chloroplastic (182 aa).

Residues 31–53 (IINISVVLGVLVYFGKGVLSNLL) traverse the membrane as a helical segment.

Belongs to the ATPase B chain family. In terms of assembly, F-type ATPases have 2 components, F(1) - the catalytic core - and F(0) - the membrane proton channel. F(1) has five subunits: alpha(3), beta(3), gamma(1), delta(1), epsilon(1). F(0) has four main subunits: a(1), b(1), b'(1) and c(10-14). The alpha and beta chains form an alternating ring which encloses part of the gamma chain. F(1) is attached to F(0) by a central stalk formed by the gamma and epsilon chains, while a peripheral stalk is formed by the delta, b and b' chains.

The protein localises to the plastid. It is found in the chloroplast thylakoid membrane. Its function is as follows. F(1)F(0) ATP synthase produces ATP from ADP in the presence of a proton or sodium gradient. F-type ATPases consist of two structural domains, F(1) containing the extramembraneous catalytic core and F(0) containing the membrane proton channel, linked together by a central stalk and a peripheral stalk. During catalysis, ATP synthesis in the catalytic domain of F(1) is coupled via a rotary mechanism of the central stalk subunits to proton translocation. Component of the F(0) channel, it forms part of the peripheral stalk, linking F(1) to F(0). This Welwitschia mirabilis (Tree tumbo) protein is ATP synthase subunit b, chloroplastic.